A 395-amino-acid polypeptide reads, in one-letter code: Guanine nucleotide-binding protein subunit beta-5 (395 aa).

7 WD repeats span residues 103-142, 145-184, 193-234, 236-278, 279-318, 320-362, and 365-394; these read GHGNKVLCMDWCKDKRRIVSSSQDGKVIVWDSFTTNKEHA, MPCTWVMACAYAPSGCAIACGGLDNKCSVYPLTFDKNENM, MHTN…QSFH, HGAD…QAFE, THESDINSVRYYPSGDAFASGSDDATCRLYDLRADREVAI, SKES…RVSI, and GHENRVSTLRVSPDGTAFCSGSWDHTLRVW.

The protein belongs to the WD repeat G protein beta family. Component of a complex composed of RGS9 (isoform RGS9-1), GNB5 and RGS9BP; within this complex, the presence of GNB5 stabilizes both itself and RGS9 and increases RGS9 GTPase-activating protein (GAP) activity. Interacts with RGS7, forming the RGS7-GNB5 complex; within this complex, the presence of GNB5 increases RGS7 GTPase-activating protein (GAP) activity. Interacts with GPR158; promotes the GTPase activator activity of the RGS7-GNB5 complex in absence of glycine, in contrast GTPase activator activity of the RGS7-GNB5 complex is inhibited in presence of glycine. Interacts with RGS6. Widely expressed.

It localises to the membrane. Functionally, enhances GTPase-activating protein (GAP) activity of regulator of G protein signaling (RGS) proteins, such as RGS7 and RGS9, hence involved in the termination of the signaling initiated by the G protein coupled receptors (GPCRs) by accelerating the GTP hydrolysis on the G-alpha subunits, thereby promoting their inactivation. Increases RGS7 GTPase-activating protein (GAP) activity, thereby regulating mood and cognition. Increases RGS9 GTPase-activating protein (GAP) activity, hence contributes to the deactivation of G protein signaling initiated by D(2) dopamine receptors. May play an important role in neuronal signaling, including in the parasympathetic, but not sympathetic, control of heart rate. This is Guanine nucleotide-binding protein subunit beta-5 (GNB5) from Homo sapiens (Human).